Consider the following 564-residue polypeptide: Forkhead transcription factor HCM1 (564 aa).

Residues 33 to 80 (DEKEMITPPSSTVRKTMKEVNKRPSHPLSPDHSSPIAPSKAKRQRSDT) are disordered. Over residues 58 to 67 (HPLSPDHSSP) the composition is skewed to low complexity. A DNA-binding region (fork-head) is located at residues 108–199 (KKPPYSYATL…KFFKGENRGY (92 aa)). The segment covering 224–241 (QVESGEGNDDLPDEEERE) has biased composition (acidic residues). A disordered region spans residues 224–246 (QVESGEGNDDLPDEEEREEAGKF). The residue at position 342 (threonine 342) is a Phosphothreonine. The segment at 401–448 (SKPQSQQSYSNSQLPPPPSSHGSDLLKTPKMRHSDGLEKTPSRLISTP) is disordered. The segment covering 402–413 (KPQSQQSYSNSQ) has biased composition (polar residues). Basic and acidic residues predominate over residues 432 to 441 (RHSDGLEKTP). A Phosphoserine modification is found at serine 496. The segment at 536-564 (SDGNNTTDSNQKHHPYHNHPSNDSGNEKN) is disordered. The segment covering 554–564 (HPSNDSGNEKN) has biased composition (polar residues).

In terms of processing, phosphorylated by CDK1.

The protein localises to the cytoplasm. Its subcellular location is the nucleus. Its function is as follows. Transcription factor regulating the cell cycle specific transcription of a spindle pole body (SPB) calmodulin binding protein SPC110. Required for full induction of SPC110 transcription in late G1. Binds to DNA consensus sequence 5'-[AT]AA[TC]AAACAA[AT]-3'. Dosage dependent suppressor of calmodulin mutants which have specific defects in SPB assembly. This is Forkhead transcription factor HCM1 (HCM1) from Saccharomyces cerevisiae (strain ATCC 204508 / S288c) (Baker's yeast).